A 344-amino-acid polypeptide reads, in one-letter code: GTP 3',8-cyclase (344 aa).

A Radical SAM core domain is found at 19-244 (PFARPITYLR…TPLAERTGGP (226 aa)). A GTP-binding site is contributed by R28. The [4Fe-4S] cluster site is built by C35 and C39. An S-adenosyl-L-methionine-binding site is contributed by Y41. C42 provides a ligand contact to [4Fe-4S] cluster. GTP is bound at residue R77. Position 81 (G81) interacts with S-adenosyl-L-methionine. GTP is bound at residue T110. An S-adenosyl-L-methionine-binding site is contributed by S134. K170 provides a ligand contact to GTP. Position 204 (M204) interacts with S-adenosyl-L-methionine. [4Fe-4S] cluster-binding residues include C268 and C271. Residue 273–275 (RVR) participates in GTP binding. C285 contributes to the [4Fe-4S] cluster binding site.

Belongs to the radical SAM superfamily. MoaA family. As to quaternary structure, monomer and homodimer. It depends on [4Fe-4S] cluster as a cofactor.

The enzyme catalyses GTP + AH2 + S-adenosyl-L-methionine = (8S)-3',8-cyclo-7,8-dihydroguanosine 5'-triphosphate + 5'-deoxyadenosine + L-methionine + A + H(+). The protein operates within cofactor biosynthesis; molybdopterin biosynthesis. In terms of biological role, catalyzes the cyclization of GTP to (8S)-3',8-cyclo-7,8-dihydroguanosine 5'-triphosphate. This is GTP 3',8-cyclase from Paracoccus denitrificans (strain Pd 1222).